Here is a 342-residue protein sequence, read N- to C-terminus: N-acetyl-gamma-glutamyl-phosphate reductase (342 aa).

The active site involves Cys-147.

It belongs to the NAGSA dehydrogenase family. Type 1 subfamily.

It localises to the cytoplasm. It carries out the reaction N-acetyl-L-glutamate 5-semialdehyde + phosphate + NADP(+) = N-acetyl-L-glutamyl 5-phosphate + NADPH + H(+). It participates in amino-acid biosynthesis; L-arginine biosynthesis; N(2)-acetyl-L-ornithine from L-glutamate: step 3/4. Functionally, catalyzes the NADPH-dependent reduction of N-acetyl-5-glutamyl phosphate to yield N-acetyl-L-glutamate 5-semialdehyde. This is N-acetyl-gamma-glutamyl-phosphate reductase from Methanosphaera stadtmanae (strain ATCC 43021 / DSM 3091 / JCM 11832 / MCB-3).